A 1258-amino-acid polypeptide reads, in one-letter code: Cohesin subunit SA-1 (1258 aa).

Residues 1–84 (MITSELPVLQ…HPQQNGEGEP (84 aa)) are disordered. The segment covering 10 to 19 (QDSTNETTAH) has biased composition (polar residues). Phosphoserine is present on Ser24. Residues 53–62 (SPGEKSRIEA) show a composition bias toward basic and acidic residues. The region spanning 296-381 (FVHRYRDAIA…NRFKDRIVSM (86 aa)) is the SCD domain. Phosphoserine is present on residues Ser756, Ser1062, and Ser1065. Disordered regions lie at residues 1055 to 1096 (GGED…SLDN) and 1129 to 1148 (MGDQ…DFLH). The span at 1062–1074 (SVNSGSSSSKTSS) shows a compositional bias: low complexity. A compositionally biased stretch (basic residues) spans 1076 to 1087 (RNKKGRPPLHKK). Position 1093 is a phosphoserine (Ser1093). Over residues 1137-1146 (ESEHGSEPDF) the composition is skewed to basic and acidic residues. Lys1161 is covalently cross-linked (Glycyl lysine isopeptide (Lys-Gly) (interchain with G-Cter in SUMO2)).

Belongs to the SCC3 family. In terms of assembly, cohesin complexes are composed of a heterodimer between a SMC1 protein (SMC1A or SMC1B) and SMC3, which are attached via their hinge domain, and RAD21 which link them at their heads, and one STAG protein (STAG1, STAG2 or STAG3). In cohesin complexes, STAG1 is mutually exclusive with STAG2 and STAG3. Interacts directly with RAD21 in cohesin complex. The cohesin complex interacts with the cohesin loading complex subunits NIPBL/Scc2 (via HEAT repeats) and MAU2/Scc4. NIPBL directly contacts all members of the complex, RAD21, SMC1A/B, SMC3 and STAG1. In terms of processing, phosphorylated by PLK1. The large dissociation of cohesin from chromosome arms during prophase is partly due to its phosphorylation.

It localises to the nucleus. The protein resides in the chromosome. It is found in the centromere. Its function is as follows. Component of cohesin complex, a complex required for the cohesion of sister chromatids after DNA replication. The cohesin complex apparently forms a large proteinaceous ring within which sister chromatids can be trapped. At anaphase, the complex is cleaved and dissociates from chromatin, allowing sister chromatids to segregate. The cohesin complex may also play a role in spindle pole assembly during mitosis. The protein is Cohesin subunit SA-1 (STAG1) of Homo sapiens (Human).